The chain runs to 74 residues: Cecropin-P4 (74 aa).

A signal peptide spans 1 to 13; the sequence is MFLMYLLVQTTES. Positions 45–74 are cleaved as a propeptide — removed in mature form; the sequence is HRRSVAHQEEASLHVKTDELPSPDTVREQL. The segment at 51–74 is disordered; that stretch reads HQEEASLHVKTDELPSPDTVREQL.

Belongs to the cecropin family. In terms of tissue distribution, expressed in the body wall, intestine, uterus and ovary.

It localises to the secreted. In terms of biological role, has antibacterial activity against several Gram-positive and Gram-negative bacteria. Is weakly active against yeasts. Acts by a nonpore mechanism. This Ascaris suum (Pig roundworm) protein is Cecropin-P4 (ASCEC-4).